The sequence spans 244 residues: HTH-type transcriptional regulator Cmr (244 aa).

Residue G41–R160 coordinates a nucleoside 3',5'-cyclic phosphate. The HTH crp-type domain occupies R174–H237. Positions Q197–K216 form a DNA-binding region, H-T-H motif.

In terms of biological role, positively regulates the expression of at least groEL2. In Mycobacterium tuberculosis (strain CDC 1551 / Oshkosh), this protein is HTH-type transcriptional regulator Cmr (cmr).